We begin with the raw amino-acid sequence, 183 residues long: Dual-action ribosomal maturation protein DarP (183 aa).

This sequence belongs to the DarP family.

It is found in the cytoplasm. In terms of biological role, member of a network of 50S ribosomal subunit biogenesis factors which assembles along the 30S-50S interface, preventing incorrect 23S rRNA structures from forming. Promotes peptidyl transferase center (PTC) maturation. The protein is Dual-action ribosomal maturation protein DarP of Salmonella arizonae (strain ATCC BAA-731 / CDC346-86 / RSK2980).